The following is a 60-amino-acid chain: Large ribosomal subunit protein uL30 (60 aa).

This sequence belongs to the universal ribosomal protein uL30 family. As to quaternary structure, part of the 50S ribosomal subunit.

The protein is Large ribosomal subunit protein uL30 of Desulfotalea psychrophila (strain LSv54 / DSM 12343).